A 24-amino-acid polypeptide reads, in one-letter code: FLPLLAGLAANFLPKIFCKITKKC.

As to expression, expressed by the skin glands.

It is found in the secreted. Its function is as follows. Antimicrobial peptide active against the Gram-positive bacterium S.aureus (MIC=12.5 uM) and against the Gram-negative bacteria E.coli (MIC=25 uM). This chain is Brevinin-1GRa, found in Odorrana grahami (Yunnanfu frog).